The primary structure comprises 410 residues: Aminopeptidase AmpS (410 aa).

Residues E250, E316, E340, H345, H378, and D380 each coordinate a divalent metal cation.

The protein belongs to the peptidase M29 family. Co(2+) is required as a cofactor. Zn(2+) serves as cofactor. It depends on Mg(2+) as a cofactor.

Metal-dependent exopeptidase. This chain is Aminopeptidase AmpS (ampS), found in Bacillus subtilis (strain 168).